The following is a 793-amino-acid chain: DnaJ homolog subfamily C member 10 (793 aa).

Positions 1 to 32 (MGVWLNKDDYIRDLKRIILCFLIVYMAILVGT) are cleaved as a signal peptide. The J domain maps to 35 to 100 (DFYSLLGVSK…DLRKKYDKYG (66 aa)). Residues 130-232 (EIITLERREF…ESLVSFAMQH (103 aa)) form the Thioredoxin 1 domain. A disulfide bridge connects residues Cys158 and Cys161. Trxb regions lie at residues 235–350 (STVT…LPDF) and 348–463 (PDFE…PQNF). 3 consecutive Thioredoxin domains span residues 454–553 (HVTT…IEDL), 557–662 (SVVS…SLRI), and 671–778 (VSTD…ISEK). Cysteines 480 and 483 form a disulfide. Asn530 is a glycosylation site (N-linked (GlcNAc...) asparagine). 2 disulfide bridges follow: Cys588–Cys591 and Cys700–Cys703. The short motif at 790 to 793 (KDEL) is the Prevents secretion from ER element.

In terms of assembly, interacts with EDEM1. Interacts with HSPA5 (via its J domain).

Its subcellular location is the endoplasmic reticulum lumen. Endoplasmic reticulum disulfide reductase involved both in the correct folding of proteins and degradation of misfolded proteins. Required for efficient folding of proteins in the endoplasmic reticulum by catalyzing the removal of non-native disulfide bonds formed during the folding of proteins, such as LDLR. Also involved in endoplasmic reticulum-associated degradation (ERAD) by reducing incorrect disulfide bonds in misfolded glycoproteins recognized by EDEM1. Interaction with HSPA5 is required its activity, not for the disulfide reductase activity, but to facilitate the release of DNAJC10 from its substrate. Promotes apoptotic signaling pathway in response to endoplasmic reticulum stress. The polypeptide is DnaJ homolog subfamily C member 10 (DNAJC10) (Homo sapiens (Human)).